A 310-amino-acid polypeptide reads, in one-letter code: Lipoyl synthase (310 aa).

The [4Fe-4S] cluster site is built by Cys41, Cys46, Cys52, Cys68, Cys72, Cys75, and Ser281. Residues 54 to 270 enclose the Radical SAM core domain; it reads GERRTATFMI…RKVAMEKGFK (217 aa). The tract at residues 285–310 is disordered; sequence DEQVNEAAKERQRIGDEKLEAAKNEA.

It belongs to the radical SAM superfamily. Lipoyl synthase family. [4Fe-4S] cluster serves as cofactor.

It localises to the cytoplasm. It carries out the reaction [[Fe-S] cluster scaffold protein carrying a second [4Fe-4S](2+) cluster] + N(6)-octanoyl-L-lysyl-[protein] + 2 oxidized [2Fe-2S]-[ferredoxin] + 2 S-adenosyl-L-methionine + 4 H(+) = [[Fe-S] cluster scaffold protein] + N(6)-[(R)-dihydrolipoyl]-L-lysyl-[protein] + 4 Fe(3+) + 2 hydrogen sulfide + 2 5'-deoxyadenosine + 2 L-methionine + 2 reduced [2Fe-2S]-[ferredoxin]. The protein operates within protein modification; protein lipoylation via endogenous pathway; protein N(6)-(lipoyl)lysine from octanoyl-[acyl-carrier-protein]. Functionally, catalyzes the radical-mediated insertion of two sulfur atoms into the C-6 and C-8 positions of the octanoyl moiety bound to the lipoyl domains of lipoate-dependent enzymes, thereby converting the octanoylated domains into lipoylated derivatives. The polypeptide is Lipoyl synthase (Staphylococcus carnosus (strain TM300)).